The following is a 156-amino-acid chain: Large ribosomal subunit protein uL15 (156 aa).

The interval 1 to 56 (MDLSNLKPAEGATQAGQRLGRGEGSGRGGHSSTRGTKGQSSRSGSGTRPIWFEGGQ) is disordered.

This sequence belongs to the universal ribosomal protein uL15 family. Part of the 50S ribosomal subunit.

Functionally, binds to the 23S rRNA. This Salinibacter ruber (strain DSM 13855 / M31) protein is Large ribosomal subunit protein uL15.